A 199-amino-acid chain; its full sequence is Prolactin (199 aa).

An intrachain disulfide couples cysteine 4 to cysteine 11. Serine 26 bears the Phosphoserine mark. A glycan (N-linked (GlcNAc...) asparagine; partial) is linked at asparagine 31. Phosphoserine is present on residues serine 34 and serine 90. 2 disulfide bridges follow: cysteine 58/cysteine 174 and cysteine 191/cysteine 199.

This sequence belongs to the somatotropin/prolactin family. As to quaternary structure, interacts with PRLR.

It is found in the secreted. Functionally, prolactin acts primarily on the mammary gland by promoting lactation. The protein is Prolactin (PRL) of Camelus dromedarius (Dromedary).